The sequence spans 503 residues: Maturase K (503 aa).

This sequence belongs to the intron maturase 2 family. MatK subfamily.

It is found in the plastid. The protein resides in the chloroplast. Usually encoded in the trnK tRNA gene intron. Probably assists in splicing its own and other chloroplast group II introns. This chain is Maturase K, found in Agonis flexuosa (Australian willow myrtle).